The primary structure comprises 1342 residues: DNA-directed RNA polymerase subunit beta (1342 aa).

An N6-acetyllysine mark is found at lysine 1022 and lysine 1200.

Belongs to the RNA polymerase beta chain family. In terms of assembly, the RNAP catalytic core consists of 2 alpha, 1 beta, 1 beta' and 1 omega subunit. When a sigma factor is associated with the core the holoenzyme is formed, which can initiate transcription.

The enzyme catalyses RNA(n) + a ribonucleoside 5'-triphosphate = RNA(n+1) + diphosphate. Its function is as follows. DNA-dependent RNA polymerase catalyzes the transcription of DNA into RNA using the four ribonucleoside triphosphates as substrates. The chain is DNA-directed RNA polymerase subunit beta from Escherichia coli O139:H28 (strain E24377A / ETEC).